The chain runs to 308 residues: Testis-specific Y-encoded protein 3 (308 aa).

The protein belongs to the nucleosome assembly protein (NAP) family.

It localises to the cytoplasm. The protein localises to the nucleus. Functionally, may be involved in sperm differentiation and proliferation. The protein is Testis-specific Y-encoded protein 3 (TSPY3) of Homo sapiens (Human).